Reading from the N-terminus, the 317-residue chain is Transcription factor MYB35 (317 aa).

2 HTH myb-type domains span residues 9–65 (KSNV…RPDL) and 66–116 (KHDS…KKKL). DNA-binding regions (H-T-H motif) lie at residues 37–61 (WSLI…TNYL) and 89–112 (WSSI…NTKL).

In terms of tissue distribution, inflorescences-specific. Accumulates in anthers, especially in tapetum and meiocytes/microsporocytes and microspores during anther development.

It localises to the nucleus. Required for anther development and early tapetal function during microspore maturation. Regulates callose dissolution required for microspores release from the tetrads. The protein is Transcription factor MYB35 of Arabidopsis thaliana (Mouse-ear cress).